We begin with the raw amino-acid sequence, 1040 residues long: Neprilysin-4 (1040 aa).

The tract at residues 1-27 (MSRHSQLKLAMPSVHGAPATAPGSPMN) is disordered. The tract at residues 1-45 (MSRHSQLKLAMPSVHGAPATAPGSPMNAKARSVKLGLGVNQRTGR) is required for maintaining muscle integrity. At 1–55 (MSRHSQLKLAMPSVHGAPATAPGSPMNAKARSVKLGLGVNQRTGRVQWCPGLTCC) the chain is on the cytoplasmic side. The helical; Signal-anchor for type II membrane protein transmembrane segment at 56–76 (KMLLLLPVVMLPLTLVLILIM) threads the bilayer. Residues 77–1040 (RLDGMLAALQ…MNPQKKCSVW (964 aa)) lie on the Extracellular side of the membrane. The 790-residue stretch at 251–1040 (EEGTREGIRM…MNPQKKCSVW (790 aa)) folds into the Peptidase M13 domain. 4 cysteine pairs are disulfide-bonded: cysteine 277-cysteine 1025, cysteine 285-cysteine 985, cysteine 452-cysteine 700, and cysteine 909-cysteine 1037. Asparagine 387, asparagine 593, asparagine 723, and asparagine 819 each carry an N-linked (GlcNAc...) asparagine glycan. Residue histidine 872 participates in Zn(2+) binding. Glutamate 873 is a catalytic residue. A Zn(2+)-binding site is contributed by histidine 876. N-linked (GlcNAc...) asparagine glycosylation occurs at asparagine 916. Residue glutamate 934 participates in Zn(2+) binding. Aspartate 938 functions as the Proton donor in the catalytic mechanism. N-linked (GlcNAc...) asparagine glycosylation occurs at asparagine 969.

The protein belongs to the peptidase M13 family. In terms of assembly, interacts (via intracellular domain) with the putative carbohydrate kinase CG3534. Zn(2+) serves as cofactor. Expressed in the gonads and testes of adults, and the adult and larval brain (at protein level). In embryos, expressed in the pericardial, muscle founder and glia cells (at protein level). In stage 12 embryos, expressed in specific dorsal muscle founder cells such as DA1 and DO2, and also in the certain pericardial progenitor cells where expression persists throughout embryogenesis. Expressed in the glia cells of the embryonic, larval and adult central nervous system. Expressed in the somatic muscles of larvae, pupae and adults. Isoform A: Detected in the male abdomen (at protein level). Isoform B: Not detected in the male or female abdomen (at protein level).

It localises to the cell membrane. The protein resides in the sarcoplasmic reticulum. The protein localises to the cytoplasm. The catalysed reaction is Preferential cleavage of polypeptides between hydrophobic residues, particularly with Phe or Tyr at P1'.. Functionally, metalloendoprotease which cleaves peptides at the amino side of hydrophobic residues - such as the hormones Akh and Dh31, and the neuropeptides Allatostatins (AST1, AST2, AST3 and AST4), Crz, Drosulfakinins (DSK-I and DSK-II), Lk, sNPF and the tachykinin peptides TK-1, TK-2, TK-4 and TK-5. Functions in female fertility, memory formation and may also act in regulating insulin signaling and food intake. Likely to be involved in controlling feeding behavior and the expression of insulin-like peptides by cleaving various regulatory peptides that include certain Drosulfakinins, Allatostatins and tachykinin peptides. Required in females for normal patterns of egg laying and hatching. Required in the dorsal paired medial neurons for the proper formation of long-term (LTM) and middle-term memories (MTM). Also required in the mushroom body neurons where it functions redundantly with neprilysins Nep2 and Nep3, in normal LTM formation. Its function is as follows. Cleaves angiotensin-1 and tachykinin neuropeptide substance P. Functions in maintaining muscle integrity, possibly independently of its endopeptidase activity. The polypeptide is Neprilysin-4 (Drosophila melanogaster (Fruit fly)).